Here is a 233-residue protein sequence, read N- to C-terminus: Gamma-glutamyl-hercynylcysteine sulfoxide hydrolase (233 aa).

C2 acts as the Nucleophile in catalysis. Residues 2 to 233 enclose the Glutamine amidotransferase type-2 domain; the sequence is CRHLGWLGAQ…TALDRAKGPR (232 aa).

It catalyses the reaction gamma-L-glutamyl-hercynylcysteine S-oxide + H2O = S-(hercyn-2-yl)-L-cysteine S-oxide + L-glutamate. It functions in the pathway amino-acid biosynthesis; ergothioneine biosynthesis. Functionally, catalyzes the hydrolysis of the gamma-glutamyl amide bond of hercynyl-gamma-L-glutamyl-L-cysteine sulfoxide to produce hercynylcysteine sulfoxide, a step in the biosynthesis pathway of ergothioneine. ERG is one of the major redox buffers which protects bacteria against redox stressors and antibiotics; loss of ERG or mycothiol (MSH, the other major redox buffer in this bacteria) leads to respiratory alterations and bioenergetic deficiencies that negatively impact virulence. The polypeptide is Gamma-glutamyl-hercynylcysteine sulfoxide hydrolase (Mycobacterium tuberculosis (strain CDC 1551 / Oshkosh)).